We begin with the raw amino-acid sequence, 243 residues long: Leucyl/phenylalanyl-tRNA--protein transferase (243 aa).

This sequence belongs to the L/F-transferase family.

The protein localises to the cytoplasm. It catalyses the reaction N-terminal L-lysyl-[protein] + L-leucyl-tRNA(Leu) = N-terminal L-leucyl-L-lysyl-[protein] + tRNA(Leu) + H(+). The enzyme catalyses N-terminal L-arginyl-[protein] + L-leucyl-tRNA(Leu) = N-terminal L-leucyl-L-arginyl-[protein] + tRNA(Leu) + H(+). The catalysed reaction is L-phenylalanyl-tRNA(Phe) + an N-terminal L-alpha-aminoacyl-[protein] = an N-terminal L-phenylalanyl-L-alpha-aminoacyl-[protein] + tRNA(Phe). Its function is as follows. Functions in the N-end rule pathway of protein degradation where it conjugates Leu, Phe and, less efficiently, Met from aminoacyl-tRNAs to the N-termini of proteins containing an N-terminal arginine or lysine. The polypeptide is Leucyl/phenylalanyl-tRNA--protein transferase (Vibrio cholerae serotype O1 (strain ATCC 39541 / Classical Ogawa 395 / O395)).